A 377-amino-acid polypeptide reads, in one-letter code: Carbonic anhydrase 1 (377 aa).

The N-terminal stretch at 1–20 (MARTGALLLVALALAGCAQA) is a signal peptide. Positions 38 to 318 (DHWDHGLNGE…HHHRRLLHNH (281 aa)) constitute an Alpha-carbonic anhydrase domain. Disulfide bonds link Cys-61–Cys-264, Cys-194–Cys-198, and Cys-296–Cys-351. N-linked (GlcNAc...) asparagine glycosylation is present at Asn-101. His-112 acts as the Proton acceptor in catalysis. Asn-135 carries N-linked (GlcNAc...) asparagine glycosylation. Zn(2+) contacts are provided by His-163, His-165, and His-182. Substrate-binding positions include Thr-260 and 260-261 (TT). An N-linked (GlcNAc...) asparagine glycan is attached at Asn-297.

This sequence belongs to the alpha-carbonic anhydrase family. As to quaternary structure, tetramer of two large and two small subunits linked by two disulfide bonds. Zn(2+) serves as cofactor.

Its subcellular location is the periplasm. It carries out the reaction hydrogencarbonate + H(+) = CO2 + H2O. Functionally, reversible hydration of carbon dioxide. This Chlamydomonas reinhardtii (Chlamydomonas smithii) protein is Carbonic anhydrase 1 (CAH1).